A 546-amino-acid chain; its full sequence is Chaperonin GroEL (546 aa).

ATP-binding positions include 30-33 (TLGP), Lys51, 87-91 (DGTTT), Gly415, and Asp495.

This sequence belongs to the chaperonin (HSP60) family. In terms of assembly, forms a cylinder of 14 subunits composed of two heptameric rings stacked back-to-back. Interacts with the co-chaperonin GroES.

It is found in the cytoplasm. The enzyme catalyses ATP + H2O + a folded polypeptide = ADP + phosphate + an unfolded polypeptide.. Together with its co-chaperonin GroES, plays an essential role in assisting protein folding. The GroEL-GroES system forms a nano-cage that allows encapsulation of the non-native substrate proteins and provides a physical environment optimized to promote and accelerate protein folding. The polypeptide is Chaperonin GroEL (Alteromonas mediterranea (strain DSM 17117 / CIP 110805 / LMG 28347 / Deep ecotype)).